The primary structure comprises 161 residues: Nodulation protein N (161 aa).

The MaoC-like domain maps to V9–E133.

The protein to the R.meliloti counterpart.

Involved in the production of the root hair deformation (HAD) factor specifically on medicago. This chain is Nodulation protein N (nodN), found in Rhizobium leguminosarum bv. viciae.